We begin with the raw amino-acid sequence, 320 residues long: Mitochondrial glutamate carrier 2 (320 aa).

Solcar repeat units lie at residues 11-97 (LSIT…LRQL), 105-215 (RNLK…LNQL), and 224-313 (ASFT…GIGE). Helical transmembrane passes span 17 to 37 (LING…IDLA), 66 to 86 (FLGM…EKAI), and 111 to 131 (MLAG…MEML). Ser150 carries the phosphoserine modification. 3 consecutive transmembrane segments (helical) span residues 190 to 210 (GLGA…PLFA), 230 to 250 (FVAG…LDVL), and 293 to 313 (ALVI…GIGE).

The protein belongs to the mitochondrial carrier (TC 2.A.29) family.

It is found in the mitochondrion inner membrane. It catalyses the reaction L-glutamate(in) + H(+)(in) = L-glutamate(out) + H(+)(out). Functionally, responsible for the transport of glutamate from the cytosol into the mitochondrial matrix with the concomitant import of a proton (symport system). The polypeptide is Mitochondrial glutamate carrier 2 (Slc25a18) (Rattus norvegicus (Rat)).